We begin with the raw amino-acid sequence, 132 residues long: Large ribosomal subunit protein uL24 (132 aa).

This sequence belongs to the universal ribosomal protein uL24 family. In terms of assembly, part of the 50S ribosomal subunit.

One of two assembly initiator proteins, it binds directly to the 5'-end of the 23S rRNA, where it nucleates assembly of the 50S subunit. Functionally, one of the proteins that surrounds the polypeptide exit tunnel on the outside of the subunit. This chain is Large ribosomal subunit protein uL24, found in Aquifex aeolicus (strain VF5).